Reading from the N-terminus, the 170-residue chain is UPF0260 protein Rpal_2074 (170 aa).

This sequence belongs to the UPF0260 family.

This chain is UPF0260 protein Rpal_2074, found in Rhodopseudomonas palustris (strain TIE-1).